The chain runs to 206 residues: ATP phosphoribosyltransferase (206 aa).

This sequence belongs to the ATP phosphoribosyltransferase family. Short subfamily. As to quaternary structure, heteromultimer composed of HisG and HisZ subunits.

The protein localises to the cytoplasm. The catalysed reaction is 1-(5-phospho-beta-D-ribosyl)-ATP + diphosphate = 5-phospho-alpha-D-ribose 1-diphosphate + ATP. It functions in the pathway amino-acid biosynthesis; L-histidine biosynthesis; L-histidine from 5-phospho-alpha-D-ribose 1-diphosphate: step 1/9. Its function is as follows. Catalyzes the condensation of ATP and 5-phosphoribose 1-diphosphate to form N'-(5'-phosphoribosyl)-ATP (PR-ATP). Has a crucial role in the pathway because the rate of histidine biosynthesis seems to be controlled primarily by regulation of HisG enzymatic activity. This Brachyspira hyodysenteriae (strain ATCC 49526 / WA1) protein is ATP phosphoribosyltransferase.